Here is a 334-residue protein sequence, read N- to C-terminus: Anthranilate phosphoribosyltransferase (334 aa).

5-phospho-alpha-D-ribose 1-diphosphate is bound by residues Gly-81, 84-85 (GD), Thr-89, 91-94 (NIST), 109-117 (KHGNRSVSS), and Ala-121. Gly-81 contributes to the anthranilate binding site. Mg(2+) is bound at residue Ser-93. An anthranilate-binding site is contributed by Asn-112. Anthranilate is bound at residue Arg-167. Residues Asp-225 and Glu-226 each coordinate Mg(2+).

Belongs to the anthranilate phosphoribosyltransferase family. Homodimer. Requires Mg(2+) as cofactor.

The enzyme catalyses N-(5-phospho-beta-D-ribosyl)anthranilate + diphosphate = 5-phospho-alpha-D-ribose 1-diphosphate + anthranilate. The protein operates within amino-acid biosynthesis; L-tryptophan biosynthesis; L-tryptophan from chorismate: step 2/5. Functionally, catalyzes the transfer of the phosphoribosyl group of 5-phosphorylribose-1-pyrophosphate (PRPP) to anthranilate to yield N-(5'-phosphoribosyl)-anthranilate (PRA). The polypeptide is Anthranilate phosphoribosyltransferase (Histophilus somni (strain 2336) (Haemophilus somnus)).